The primary structure comprises 319 residues: D-alanine--D-alanine ligase B (319 aa).

Residues 117–312 (KRVWLSLGLP…FQQLVLAILA (196 aa)) form the ATP-grasp domain. 143–198 (AQRLGFPLIVKPAHEGSSIGMAKVGGLDELIAAWREAARYDSQVLVEQWISGPEFT) is an ATP binding site. Positions 266, 279, and 281 each coordinate Mg(2+).

Belongs to the D-alanine--D-alanine ligase family. Requires Mg(2+) as cofactor. Mn(2+) serves as cofactor.

It is found in the cytoplasm. The enzyme catalyses 2 D-alanine + ATP = D-alanyl-D-alanine + ADP + phosphate + H(+). The protein operates within cell wall biogenesis; peptidoglycan biosynthesis. In terms of biological role, cell wall formation. This is D-alanine--D-alanine ligase B from Pseudomonas aeruginosa (strain ATCC 15692 / DSM 22644 / CIP 104116 / JCM 14847 / LMG 12228 / 1C / PRS 101 / PAO1).